The following is a 281-amino-acid chain: 2-dehydro-3-deoxyphosphooctonate aldolase (281 aa).

Belongs to the KdsA family.

Its subcellular location is the cytoplasm. The catalysed reaction is D-arabinose 5-phosphate + phosphoenolpyruvate + H2O = 3-deoxy-alpha-D-manno-2-octulosonate-8-phosphate + phosphate. It participates in carbohydrate biosynthesis; 3-deoxy-D-manno-octulosonate biosynthesis; 3-deoxy-D-manno-octulosonate from D-ribulose 5-phosphate: step 2/3. Its pathway is bacterial outer membrane biogenesis; lipopolysaccharide biosynthesis. This chain is 2-dehydro-3-deoxyphosphooctonate aldolase, found in Pseudomonas fluorescens (strain Pf0-1).